Consider the following 208-residue polypeptide: Orotidine 5'-phosphate decarboxylase (208 aa).

Substrate-binding positions include Asp7, Lys29, 57 to 66 (DLKLADIPNT), Ser109, 162 to 172 (PGIGAQGGKAK), Gly185, and Arg186. Lys59 acts as the Proton donor in catalysis.

It belongs to the OMP decarboxylase family. Type 1 subfamily. Homodimer.

It catalyses the reaction orotidine 5'-phosphate + H(+) = UMP + CO2. It functions in the pathway pyrimidine metabolism; UMP biosynthesis via de novo pathway; UMP from orotate: step 2/2. Functionally, catalyzes the decarboxylation of orotidine 5'-monophosphate (OMP) to uridine 5'-monophosphate (UMP). The protein is Orotidine 5'-phosphate decarboxylase of Pyrococcus abyssi (strain GE5 / Orsay).